A 408-amino-acid polypeptide reads, in one-letter code: WD repeat-containing protein JIP5 (408 aa).

6 WD repeats span residues 5–44, 50–86, 87–130, 133–172, 177–216, and 221–267; these read PVGSQIFDVVFHPSSAIAYTGLLNGHIKAFAYGEQGDSHN, PSKRSCRGLSLNGDGSKLYAVGKSKALHIVDTTTTDI, DARS…SVKT, QHFDYISDFLWLDDKKQLVATSGDGTLSVMDVRAKEPKVV, DQEDDLLSIVAIKSAQKILVGTQLGILSVFNRKKGWGDCV, and GHPL…FLGV. The disordered stretch occupies residues 311 to 408; the sequence is VDSDEEEDDE…VIDKDFFDGL (98 aa). Composition is skewed to acidic residues over residues 313–339 and 356–366; these read SDEEEDDEEEWGGIEGADGSEGEEDEE and DESDDEDEEME. A compositionally biased stretch (basic and acidic residues) spans 396 to 408; that stretch reads KETVIDKDFFDGL.

Belongs to the WD repeat WDR55 family.

It localises to the nucleus. Its subcellular location is the nucleolus. In Coprinopsis cinerea (strain Okayama-7 / 130 / ATCC MYA-4618 / FGSC 9003) (Inky cap fungus), this protein is WD repeat-containing protein JIP5 (JIP5).